The sequence spans 216 residues: GTP cyclohydrolase-2 (216 aa).

51–55 lines the GTP pocket; that stretch reads RIHSE. The Zn(2+) site is built by C56, C67, and C69. GTP is bound by residues Q72, 94–96, and T116; that span reads EGR. D128 acts as the Proton acceptor in catalysis. R130 serves as the catalytic Nucleophile. T151 and K156 together coordinate GTP.

This sequence belongs to the GTP cyclohydrolase II family. Zn(2+) serves as cofactor.

The catalysed reaction is GTP + 4 H2O = 2,5-diamino-6-hydroxy-4-(5-phosphoribosylamino)-pyrimidine + formate + 2 phosphate + 3 H(+). It functions in the pathway cofactor biosynthesis; riboflavin biosynthesis; 5-amino-6-(D-ribitylamino)uracil from GTP: step 1/4. Catalyzes the conversion of GTP to 2,5-diamino-6-ribosylamino-4(3H)-pyrimidinone 5'-phosphate (DARP), formate and pyrophosphate. The polypeptide is GTP cyclohydrolase-2 (Haemophilus influenzae (strain PittEE)).